Here is an 88-residue protein sequence, read N- to C-terminus: Small ribosomal subunit protein uS12 (88 aa).

Positions 1–24 (RKGRRDKIGKVKTAALKGSPQRRG) are disordered. Asp81 is modified (3-methylthioaspartic acid).

It belongs to the universal ribosomal protein uS12 family. As to quaternary structure, part of the 30S ribosomal subunit. Contacts proteins S8 and S17. May interact with IF1 in the 30S initiation complex.

In terms of biological role, with S4 and S5 plays an important role in translational accuracy. Functionally, interacts with and stabilizes bases of the 16S rRNA that are involved in tRNA selection in the A site and with the mRNA backbone. Located at the interface of the 30S and 50S subunits, it traverses the body of the 30S subunit contacting proteins on the other side and probably holding the rRNA structure together. The combined cluster of proteins S8, S12 and S17 appears to hold together the shoulder and platform of the 30S subunit. The sequence is that of Small ribosomal subunit protein uS12 (rpsL) from Mycobacterium szulgai.